The chain runs to 411 residues: Serine hydroxymethyltransferase (411 aa).

120–122 (GHL) is a binding site for (6S)-5,6,7,8-tetrahydrofolate. N6-(pyridoxal phosphate)lysine is present on Lys225. (6S)-5,6,7,8-tetrahydrofolate is bound at residue 350–352 (SPF).

The protein belongs to the SHMT family. As to quaternary structure, homodimer. Pyridoxal 5'-phosphate is required as a cofactor.

Its subcellular location is the cytoplasm. The catalysed reaction is (6R)-5,10-methylene-5,6,7,8-tetrahydrofolate + glycine + H2O = (6S)-5,6,7,8-tetrahydrofolate + L-serine. It participates in one-carbon metabolism; tetrahydrofolate interconversion. It functions in the pathway amino-acid biosynthesis; glycine biosynthesis; glycine from L-serine: step 1/1. In terms of biological role, catalyzes the reversible interconversion of serine and glycine with tetrahydrofolate (THF) serving as the one-carbon carrier. This reaction serves as the major source of one-carbon groups required for the biosynthesis of purines, thymidylate, methionine, and other important biomolecules. Also exhibits THF-independent aldolase activity toward beta-hydroxyamino acids, producing glycine and aldehydes, via a retro-aldol mechanism. The polypeptide is Serine hydroxymethyltransferase (Lactobacillus gasseri (strain ATCC 33323 / DSM 20243 / BCRC 14619 / CIP 102991 / JCM 1131 / KCTC 3163 / NCIMB 11718 / NCTC 13722 / AM63)).